The following is a 467-amino-acid chain: L-seryl-tRNA(Sec) selenium transferase (467 aa).

The residue at position 298 (K298) is an N6-(pyridoxal phosphate)lysine.

Belongs to the SelA family. Pyridoxal 5'-phosphate is required as a cofactor.

It is found in the cytoplasm. It carries out the reaction L-seryl-tRNA(Sec) + selenophosphate + H(+) = L-selenocysteinyl-tRNA(Sec) + phosphate. The protein operates within aminoacyl-tRNA biosynthesis; selenocysteinyl-tRNA(Sec) biosynthesis; selenocysteinyl-tRNA(Sec) from L-seryl-tRNA(Sec) (bacterial route): step 1/1. Functionally, converts seryl-tRNA(Sec) to selenocysteinyl-tRNA(Sec) required for selenoprotein biosynthesis. The polypeptide is L-seryl-tRNA(Sec) selenium transferase (Alkaliphilus metalliredigens (strain QYMF)).